A 244-amino-acid chain; its full sequence is rRNA adenine N-6-methyltransferase (244 aa).

Asparagine 11, isoleucine 13, glycine 38, glutamate 59, aspartate 84, and asparagine 101 together coordinate S-adenosyl-L-methionine.

Belongs to the class I-like SAM-binding methyltransferase superfamily. rRNA adenine N(6)-methyltransferase family.

The catalysed reaction is adenosine(2085) in 23S rRNA + 2 S-adenosyl-L-methionine = N(6)-dimethyladenosine(2085) in 23S rRNA + 2 S-adenosyl-L-homocysteine + 2 H(+). This protein produces a dimethylation of the adenine residue at position 2085 in 23S rRNA, resulting in reduced affinity between ribosomes and macrolide-lincosamide-streptogramin B antibiotics. Is involved in erythromycin resistance. This is rRNA adenine N-6-methyltransferase (ermGT) from Limosilactobacillus reuteri (Lactobacillus reuteri).